Consider the following 329-residue polypeptide: Glycerol-3-phosphate dehydrogenase [NAD(P)+] (329 aa).

NADPH is bound by residues Ser13, Trp14, His34, and Lys105. Lys105, Gly134, and Ser136 together coordinate sn-glycerol 3-phosphate. Ala138 is a binding site for NADPH. Positions 189, 242, 252, 253, and 254 each coordinate sn-glycerol 3-phosphate. Residue Lys189 is the Proton acceptor of the active site. Residue Arg253 coordinates NADPH. 2 residues coordinate NADPH: Val277 and Glu279.

This sequence belongs to the NAD-dependent glycerol-3-phosphate dehydrogenase family.

Its subcellular location is the cytoplasm. The catalysed reaction is sn-glycerol 3-phosphate + NAD(+) = dihydroxyacetone phosphate + NADH + H(+). It catalyses the reaction sn-glycerol 3-phosphate + NADP(+) = dihydroxyacetone phosphate + NADPH + H(+). It participates in membrane lipid metabolism; glycerophospholipid metabolism. Catalyzes the reduction of the glycolytic intermediate dihydroxyacetone phosphate (DHAP) to sn-glycerol 3-phosphate (G3P), the key precursor for phospholipid synthesis. This Legionella pneumophila subsp. pneumophila (strain Philadelphia 1 / ATCC 33152 / DSM 7513) protein is Glycerol-3-phosphate dehydrogenase [NAD(P)+].